The primary structure comprises 498 residues: MKINPTNSSSLTSTLEKKNLGNITQIIGPVLDVAFPPGKMPNIYNALVVKGRDTAGQQINVTCEVQQLLGNNRVRAVAMSATDGLTRGMEVMDTGAPLSVPVGGTTLGRIFNVLGEPVDNLGPVDTRTTSPIHRSAPAFIQLDTKLSIFETGIKVVDLLAPYRRGGKIGLFGGAGVGKTVLIMELINNIAKAHGGVSVFGGVGERTREGNDLYMEMKESGVINEENIAESKVALVYGQMNEPPGARMRVGLTALTMAEYFRDVNEQDVLLFIDNIFRFVQAGSEVSALLGRMPSAVGYQPTLSTEMGTLQERITSTKEGSITSIQAVYVPADDLTDPAPATTFAHLDATTVLSRGLAAKGIYPAVDPLDSTSTMLQPRIVGEDHYETAQKVKQTLQRYKELQDIIAILGLDELSEEDRLTVARARKIERFLSQPFFVAEVFTGSPGKYVGLSETIRGFRLILSGELDSLPEQAFYLVGNIDEATAKAMNLEMESNSNK.

172-179 provides a ligand contact to ATP; it reads GGAGVGKT.

It belongs to the ATPase alpha/beta chains family. As to quaternary structure, F-type ATPases have 2 components, CF(1) - the catalytic core - and CF(0) - the membrane proton channel. CF(1) has five subunits: alpha(3), beta(3), gamma(1), delta(1), epsilon(1). CF(0) has four main subunits: a(1), b(1), b'(1) and c(9-12).

The protein localises to the plastid. It is found in the chloroplast thylakoid membrane. It catalyses the reaction ATP + H2O + 4 H(+)(in) = ADP + phosphate + 5 H(+)(out). Produces ATP from ADP in the presence of a proton gradient across the membrane. The catalytic sites are hosted primarily by the beta subunits. The protein is ATP synthase subunit beta, chloroplastic of Daucus carota (Wild carrot).